The sequence spans 481 residues: ATP synthase subunit beta, chloroplastic (481 aa).

Residue 163–170 (GGAGVGKT) coordinates ATP.

Belongs to the ATPase alpha/beta chains family. F-type ATPases have 2 components, CF(1) - the catalytic core - and CF(0) - the membrane proton channel. CF(1) has five subunits: alpha(3), beta(3), gamma(1), delta(1), epsilon(1). CF(0) has four main subunits: a(1), b(1), b'(1) and c(9-12).

It localises to the plastid. Its subcellular location is the chloroplast thylakoid membrane. The catalysed reaction is ATP + H2O + 4 H(+)(in) = ADP + phosphate + 5 H(+)(out). Functionally, produces ATP from ADP in the presence of a proton gradient across the membrane. The catalytic sites are hosted primarily by the beta subunits. This chain is ATP synthase subunit beta, chloroplastic, found in Tupiella akineta (Green alga).